The sequence spans 176 residues: Large ribosomal subunit protein uL16 (176 aa).

The protein belongs to the universal ribosomal protein uL16 family.

This chain is Large ribosomal subunit protein uL16, found in Thermoplasma volcanium (strain ATCC 51530 / DSM 4299 / JCM 9571 / NBRC 15438 / GSS1).